A 387-amino-acid chain; its full sequence is ATP phosphoribosyltransferase regulatory subunit (387 aa).

This sequence belongs to the class-II aminoacyl-tRNA synthetase family. HisZ subfamily. Heteromultimer composed of HisG and HisZ subunits.

The protein resides in the cytoplasm. It functions in the pathway amino-acid biosynthesis; L-histidine biosynthesis; L-histidine from 5-phospho-alpha-D-ribose 1-diphosphate: step 1/9. In terms of biological role, required for the first step of histidine biosynthesis. May allow the feedback regulation of ATP phosphoribosyltransferase activity by histidine. This Ralstonia pickettii (strain 12J) protein is ATP phosphoribosyltransferase regulatory subunit.